The following is a 238-amino-acid chain: MLRVIIVDDEQPAREDLRERLNEEHGIEIVAECSNALEAIPAIQRLQPDVVFLDIQMPRINGLELASMLNPESMPHIVFVTAYDEYAIRAFEEHAFDYLLKPLDHQRLAKTLTRLSRDLIVKNNLHKVIKPILRHIPCSGHNRIFLLKIEEVEYLSSELSGVHVVGTVQSGYTQLSLKTLEEKTPFIRCHRQYMVNTEQLGEIQLMDNGAAEVITRSGKHIPVSRRYLKSLKEKLGIA.

The Response regulatory domain maps to Arg3–Ser116. Asp54 carries the 4-aspartylphosphate modification. The 102-residue stretch at Ile136–Ile237 folds into the HTH LytTR-type domain.

This is an uncharacterized protein from Yersinia pestis.